The sequence spans 281 residues: Nucleotide-binding protein MADE_1004170 (281 aa).

Residue 8-15 (GRSGSGKS) coordinates ATP. 56-59 (DVRN) contacts GTP.

The protein belongs to the RapZ-like family.

Displays ATPase and GTPase activities. The polypeptide is Nucleotide-binding protein MADE_1004170 (Alteromonas mediterranea (strain DSM 17117 / CIP 110805 / LMG 28347 / Deep ecotype)).